Here is a 303-residue protein sequence, read N- to C-terminus: ATP synthase gamma chain (303 aa).

The protein belongs to the ATPase gamma chain family. In terms of assembly, F-type ATPases have 2 components, CF(1) - the catalytic core - and CF(0) - the membrane proton channel. CF(1) has five subunits: alpha(3), beta(3), gamma(1), delta(1), epsilon(1). CF(0) has three main subunits: a, b and c.

The protein resides in the cell inner membrane. Its function is as follows. Produces ATP from ADP in the presence of a proton gradient across the membrane. The gamma chain is believed to be important in regulating ATPase activity and the flow of protons through the CF(0) complex. This Bartonella henselae (strain ATCC 49882 / DSM 28221 / CCUG 30454 / Houston 1) (Rochalimaea henselae) protein is ATP synthase gamma chain.